Reading from the N-terminus, the 425-residue chain is Enolase (425 aa).

(2R)-2-phosphoglycerate is bound at residue glutamine 162. Residue glutamate 204 is the Proton donor of the active site. Residues aspartate 241, glutamate 282, and aspartate 309 each coordinate Mg(2+). 4 residues coordinate (2R)-2-phosphoglycerate: lysine 334, arginine 363, serine 364, and lysine 385. The active-site Proton acceptor is the lysine 334.

It belongs to the enolase family. The cofactor is Mg(2+).

It localises to the cytoplasm. Its subcellular location is the secreted. It is found in the cell surface. It carries out the reaction (2R)-2-phosphoglycerate = phosphoenolpyruvate + H2O. Its pathway is carbohydrate degradation; glycolysis; pyruvate from D-glyceraldehyde 3-phosphate: step 4/5. Functionally, catalyzes the reversible conversion of 2-phosphoglycerate (2-PG) into phosphoenolpyruvate (PEP). It is essential for the degradation of carbohydrates via glycolysis. The sequence is that of Enolase from Corynebacterium jeikeium (strain K411).